A 68-amino-acid polypeptide reads, in one-letter code: Molybdenum-pterin-binding protein 1 (68 aa).

In terms of domain architecture, Mop spans S2 to A68.

Functionally, binds one mole of molybdenum per mole of protein and contains a pterin. This is Molybdenum-pterin-binding protein 1 (mopI) from Clostridium pasteurianum.